The sequence spans 95 residues: MRTLSLLTLLALAALCLSDLTDATPTGPESDKAFMSKQEGNKVVNRLRRYLGASVPSPDPLEPTRELCELDPACDELSNQYGLKTAYRRIYGITI.

Positions 1-23 are cleaved as a signal peptide; sequence MRTLSLLTLLALAALCLSDLTDA. Positions 24–49 are excised as a propeptide; it reads TPTGPESDKAFMSKQEGNKVVNRLRR. In terms of domain architecture, Gla spans 46 to 92; it reads RLRRYLGASVPSPDPLEPTRELCELDPACDELSNQYGLKTAYRRIYG. Ca(2+) is bound by residues Glu62, Glu66, Glu69, and Asp75. 2 positions are modified to 4-carboxyglutamate: Glu66 and Glu69. A disulfide bridge connects residues Cys68 and Cys74.

The protein belongs to the osteocalcin/matrix Gla protein family. Gamma-carboxyglutamic acid residues are formed by vitamin K dependent carboxylation. These residues are essential for the binding of calcium. As to expression, expressed in kidney and lung, but not in bone.

It is found in the secreted. In terms of biological role, binds strongly to apatite and calcium. The polypeptide is Osteocalcin-related protein (Mus musculus (Mouse)).